A 323-amino-acid chain; its full sequence is Sporulation-delaying protein SdpB (323 aa).

The next 6 membrane-spanning stretches (helical) occupy residues 27–49 (LLGFSTLLVLLFNSTDILFSYSA), 70–92 (SINFEIIRYLMIFILTLVVIGWR), 112–134 (LTIDGGEQIATVLSFLILPVTLL), 155–177 (TVLFYIMTIIKIQVFIIYLNAAL), 219–241 (IVVITWLVTIFELFLAASIISNI), and 248–270 (LVLGILFHIGIIFSIGIVSFGLI).

It localises to the cell membrane. In terms of biological role, required for the maturation of SdpC to SDP. Not required for SdpC signal peptide cleavage, secretion from the cell or disulfide bond formation. The chain is Sporulation-delaying protein SdpB from Bacillus subtilis (strain 168).